Here is a 149-residue protein sequence, read N- to C-terminus: UPF0178 protein HEAR0259 (149 aa).

It belongs to the UPF0178 family.

The sequence is that of UPF0178 protein HEAR0259 from Herminiimonas arsenicoxydans.